Reading from the N-terminus, the 232-residue chain is Homeobox protein SAX-1 (232 aa).

Disordered regions lie at residues 1 to 64 (CLPD…SCAK), 122 to 150 (KQHPGADGAAAPAPPAAARCSPSPPRPAA), and 185 to 208 (LLGARVPRASTPRTSENPPRLCPS). The homeobox DNA-binding region spans 65 to 124 (PRRARTAFTYEQLVALENKFRATRYLSVCERLNLALSLSLTETQVKIWFQNRRTKWKKQH). Positions 126–142 (GADGAAAPAPPAAARCS) are enriched in low complexity.

It belongs to the NK-1 homeobox family. In terms of tissue distribution, transiently expressed in the birth zone of the whole spinal cord regardless of the axial level.

Its subcellular location is the nucleus. In Gallus gallus (Chicken), this protein is Homeobox protein SAX-1 (SAX1).